A 303-amino-acid polypeptide reads, in one-letter code: MLWFKNLMVYRLSRDITLRAEEMEKQLASMTFTPCGSQDMAKMGWVPPMGSHSDALTHTANGQIIICARKEEKILPSPVIKQALEAKIQKLEADQGRKLKKTEKDSLKDEVLHSLLPRAFSRFSQTMMWIDTINGLIMVDCASAKKAEDTLALLRKSLGSLPVVPLALENPIELTLTEWVRSGTVAQGFQLLDEAELKAMLEDGGVIRAKKQDLVSDEIAVHIEAGKVVTKLALDWQQRIQFVMCDDGSIKRLKFCDELRDQNEDIDREDFAQRFDADFILMTGELAALIQSLVEGLGGEAQR.

Belongs to the RdgC family.

It localises to the cytoplasm. The protein resides in the nucleoid. May be involved in recombination. The sequence is that of Recombination-associated protein RdgC from Salmonella newport (strain SL254).